The primary structure comprises 1071 residues: ATP-dependent helicase/deoxyribonuclease subunit B (1071 aa).

It belongs to the helicase family. AddB/RexB type 2 subfamily. As to quaternary structure, heterodimer of AddA and RexB. Mg(2+) serves as cofactor.

In terms of biological role, the heterodimer acts as both an ATP-dependent DNA helicase and an ATP-dependent, dual-direction single-stranded exonuclease. Recognizes the chi site generating a DNA molecule suitable for the initiation of homologous recombination. This subunit has 5' -&gt; 3' nuclease activity but not helicase activity. This Streptococcus pyogenes serotype M28 (strain MGAS6180) protein is ATP-dependent helicase/deoxyribonuclease subunit B.